A 207-amino-acid polypeptide reads, in one-letter code: Thymidylate kinase (207 aa).

Residues 11–49 (EGIDGSGKSTQARRLAEHLRDTGRDPLLTREPGGSPGAE) are disordered. Residue 12-19 (GIDGSGKS) coordinates ATP. The span at 24-38 (RLAEHLRDTGRDPLL) shows a compositional bias: basic and acidic residues.

This sequence belongs to the thymidylate kinase family.

It carries out the reaction dTMP + ATP = dTDP + ADP. Functionally, phosphorylation of dTMP to form dTDP in both de novo and salvage pathways of dTTP synthesis. This is Thymidylate kinase from Dinoroseobacter shibae (strain DSM 16493 / NCIMB 14021 / DFL 12).